The primary structure comprises 56 residues: uncharacterized protein (56 aa).

This is an uncharacterized protein from Lepidoptera (butterflies and moths).